A 78-amino-acid chain; its full sequence is Probable Vpr-like protein (78 aa).

Positions 35-43 match the Nuclear export signal motif; the sequence is AIRLLQGLF. The short motif at 45–54 is the Nuclear localization signal element; that stretch reads RYRFKKPRVD.

It is found in the virion. The protein resides in the host nucleus. In terms of biological role, seems to function as a Vpr-like protein, since it mediates host cell cycle arrest in G2 phase. Cell cycle arrest creates a favorable environment for maximizing viral expression and production. In Feline immunodeficiency virus (isolate Petaluma) (FIV), this protein is Probable Vpr-like protein.